The sequence spans 234 residues: Phosphoribosylaminoimidazole-succinocarboxamide synthase (234 aa).

The protein belongs to the SAICAR synthetase family.

It carries out the reaction 5-amino-1-(5-phospho-D-ribosyl)imidazole-4-carboxylate + L-aspartate + ATP = (2S)-2-[5-amino-1-(5-phospho-beta-D-ribosyl)imidazole-4-carboxamido]succinate + ADP + phosphate + 2 H(+). It participates in purine metabolism; IMP biosynthesis via de novo pathway; 5-amino-1-(5-phospho-D-ribosyl)imidazole-4-carboxamide from 5-amino-1-(5-phospho-D-ribosyl)imidazole-4-carboxylate: step 1/2. This is Phosphoribosylaminoimidazole-succinocarboxamide synthase from Staphylococcus epidermidis (strain ATCC 35984 / DSM 28319 / BCRC 17069 / CCUG 31568 / BM 3577 / RP62A).